The chain runs to 3564 residues: CUB and sushi domain-containing protein 1 (3564 aa).

Residues 1–26 (MTAWRRFQSLLLLLGLLVLCARLLTA) form the signal peptide. Topologically, residues 27–3487 (AKGQNCGGLV…SHYHGTSSGS (3461 aa)) are extracellular. 10 cysteine pairs are disulfide-bonded: Cys32-Cys58, Cys145-Cys185, Cys171-Cys202, Cys208-Cys234, Cys349-Cys389, Cys375-Cys406, Cys411-Cys437, Cys527-Cys567, Cys553-Cys580, and Cys584-Cys610. Residues 32–140 (CGGLVQGPNG…QGFKALYEVL (109 aa)) form the CUB 1 domain. N-linked (GlcNAc...) asparagine glycans are attached at residues Asn40 and Asn57. One can recognise a Sushi 1 domain in the interval 143-204 (HTCGNPGEIL…WDFPAPFCRA (62 aa)). A CUB 2 domain is found at 208–312 (CGGTLRGTSS…KGFNAQFQVK (105 aa)). In terms of domain architecture, Sushi 2 spans 347 to 408 (DMCPDPGIPE…WSDHRPICRA (62 aa)). Residues 411–522 (CGSNLRGPSG…PGFKAVYQEI (112 aa)) form the CUB 3 domain. One can recognise a Sushi 3 domain in the interval 525-582 (GGCGDPGIPAYGKRTGSSFLHGDTLTFECPAAFELVGERVITCQQNNQWSGNKPSCVF). Positions 584–692 (CFFNFTASSG…RGFNITYTTF (109 aa)) constitute a CUB 4 domain. 2 N-linked (GlcNAc...) asparagine glycosylation sites follow: Asn587 and Asn686. Residues 695–756 (NECHDPGIPI…WSSTVPRCEA (62 aa)) enclose the Sushi 4 domain. Intrachain disulfides connect Cys697-Cys738, Cys723-Cys754, Cys758-Cys784, Cys873-Cys913, Cys899-Cys926, and Cys930-Cys956. The 109-residue stretch at 758 to 866 (CGGHLTASSG…IGFLIHYESV (109 aa)) folds into the CUB 5 domain. A Sushi 5 domain is found at 871–928 (DSCLDPGIPVNGHRHGGDFGIRSTVTFSCDPGYTLSDDEPLVCERNHQWNHALPSCDA). Positions 930–1040 (CGGYIQGKSG…EGFNITFSEY (111 aa)) constitute a CUB 6 domain. Asn955, Asn1015, and Asn1034 each carry an N-linked (GlcNAc...) asparagine glycan. Residues 1043-1102 (EPCDDPGVPAFSRRIGFHFGVGDSLTFSCFLGYRLEGATKLTCLGGGRRVWSAPLPRCVA) form the Sushi 6 domain. 3 disulfide bridges follow: Cys1045–Cys1085, Cys1071–Cys1100, and Cys1104–Cys1130. The region spanning 1104-1212 (CGASVKGNEG…QGFQLTYTSF (109 aa)) is the CUB 7 domain. N-linked (GlcNAc...) asparagine glycans are attached at residues Asn1184 and Asn1197. The 61-residue stretch at 1215–1275 (VKCEDPGIPN…WDKPLPSCIA (61 aa)) folds into the Sushi 7 domain. 12 disulfides stabilise this stretch: Cys1217–Cys1258, Cys1244–Cys1273, Cys1277–Cys1304, Cys1391–Cys1431, Cys1417–Cys1447, Cys1451–Cys1477, Cys1564–Cys1604, Cys1590–Cys1621, Cys1625–Cys1651, Cys1741–Cys1781, Cys1767–Cys1798, and Cys1802–Cys1828. Positions 1277–1386 (CGGQIHAATS…SGFSIQFSTS (110 aa)) constitute a CUB 8 domain. The region spanning 1389 to 1449 (ATCNDPGMPQ…WQPDPPTCIA (61 aa)) is the Sushi 8 domain. Asn1399 is a glycosylation site (N-linked (GlcNAc...) asparagine). The region spanning 1451 to 1559 (CGGNLTGPAG…SGFAIEFKEK (109 aa)) is the CUB 9 domain. N-linked (GlcNAc...) asparagine glycosylation is found at Asn1454 and Asn1572. The 62-residue stretch at 1562–1623 (EACFDPGNIM…WDQVLPSCNA (62 aa)) folds into the Sushi 9 domain. The region spanning 1625 to 1733 (CGGQYTGSEG…RGFHFVYQAV (109 aa)) is the CUB 10 domain. Residue Asn1644 is glycosylated (N-linked (GlcNAc...) asparagine). Residues 1739 to 1800 (TQCSSVPEPR…WNDTIPSCVV (62 aa)) enclose the Sushi 10 domain. N-linked (GlcNAc...) asparagine glycans are attached at residues Asn1792, Asn1805, and Asn1882. Residues 1802-1910 (CSGNFTQRRG…AGFHLEYKTV (109 aa)) enclose the CUB 11 domain. The Sushi 11 domain occupies 1913 to 1972 (AACQEPALPSNSIKIGDRYMVNDVLSFQCEPGYTLQGRSHISCMPGTVRRWNYPSPLCIA). Cystine bridges form between Cys1915-Cys1955, Cys1941-Cys1970, and Cys1974-Cys2000. The CUB 12 domain occupies 1974–2082 (CGGTLSTLGG…QGFKLAYQAY (109 aa)). N-linked (GlcNAc...) asparagine glycosylation occurs at Asn2018. The Sushi 12 domain occupies 2085–2144 (QNCPDPPPFQNGYMINSDYSVGQSVSFECYPGYILIGHPVLTCQHGINRNWNYPFPRCDA). Intrachain disulfides connect Cys2087-Cys2127, Cys2113-Cys2142, and Cys2146-Cys2172. Residues 2146–2257 (CGYNVTSQNG…LNFHAFQLKK (112 aa)) form the CUB 13 domain. N-linked (GlcNAc...) asparagine glycans are attached at residues Asn2149, Asn2154, and Asn2187. Residues 2256–2317 (KKCQPPPAVP…FEGSLPTCEA (62 aa)) enclose the Sushi 13 domain. Disulfide bonds link Cys2258–Cys2300, Cys2286–Cys2315, and Cys2319–Cys2347. Residues 2319-2430 (CPANEVRTGS…KGFKIRYAAP (112 aa)) form the CUB 14 domain. N-linked (GlcNAc...) asparagine glycosylation is found at Asn2358, Asn2394, Asn2400, Asn2445, Asn2470, and Asn2503. 15 consecutive Sushi domains span residues 2430–2492 (PYCS…LCQA), 2493–2554 (VSCG…TCKP), 2555–2619 (VACP…SCRV), 2620–2677 (ISCG…RCLA), 2678–2735 (GHCG…VCVP), 2736–2793 (ITCG…TCRV), 2794–2856 (VNCS…KCLA), 2857–2914 (ISCG…HCTG), 2918–2975 (GFCG…VCEA), 2976–3034 (VSCG…DCTI), 3035–3094 (ISCG…VCKA), 3095–3152 (VLCP…QCLP), 3153–3210 (VFCG…TCID), 3214–3272 (NTCP…ECIP), and 3273–3332 (HACR…VCKS). 12 disulfide bridges follow: Cys2432–Cys2473, Cys2459–Cys2490, Cys2495–Cys2537, Cys2521–Cys2552, Cys2557–Cys2602, Cys2588–Cys2617, Cys2622–Cys2662, Cys2648–Cys2675, Cys2680–Cys2720, Cys2706–Cys2733, Cys2738–Cys2778, and Cys2764–Cys2791. An N-linked (GlcNAc...) asparagine glycan is attached at Asn2605. Asn2750 and Asn2761 each carry an N-linked (GlcNAc...) asparagine glycan. N-linked (GlcNAc...) asparagine glycosylation occurs at Asn2795. Intrachain disulfides connect Cys2796–Cys2841, Cys2827–Cys2854, Cys2859–Cys2899, Cys2885–Cys2912, Cys2920–Cys2960, Cys2946–Cys2973, Cys2978–Cys3019, Cys3005–Cys3032, Cys3037–Cys3079, Cys3063–Cys3092, Cys3097–Cys3137, Cys3123–Cys3150, Cys3155–Cys3195, Cys3181–Cys3208, Cys3216–Cys3257, Cys3243–Cys3270, Cys3275–Cys3317, and Cys3302–Cys3330. Residue Asn2894 is glycosylated (N-linked (GlcNAc...) asparagine). Asn2963 carries N-linked (GlcNAc...) asparagine glycosylation. Residues Asn3022 and Asn3056 are each glycosylated (N-linked (GlcNAc...) asparagine). Asn3105 is a glycosylation site (N-linked (GlcNAc...) asparagine). Asn3228 and Asn3260 each carry an N-linked (GlcNAc...) asparagine glycan. 3 N-linked (GlcNAc...) asparagine glycosylation sites follow: Asn3339, Asn3379, and Asn3386. A helical transmembrane segment spans residues 3488 to 3508 (VAAAILVPFFALILSGFAFYL). At 3509–3564 (YKHRTRPKVQYNGYAGHENSNGQASFENPMYDTNLKPTEAKAVRFDTTLNTVCTVV) the chain is on the cytoplasmic side.

This sequence belongs to the CSMD family. In terms of tissue distribution, weakly expressed in most tissues, except in brain. Expressed at intermediate level in brain, including cerebellum, substantia nigra, hippocampus and fetal brain.

It is found in the membrane. Functionally, potential suppressor of squamous cell carcinomas. In Homo sapiens (Human), this protein is CUB and sushi domain-containing protein 1 (CSMD1).